A 522-amino-acid polypeptide reads, in one-letter code: Serine/threonine-protein kinase pak-2 (522 aa).

The CRIB domain maps to 16–29; the sequence is ISTPSNFEHRIHAG. Over residues 183 to 204 the composition is skewed to polar residues; sequence TTTPQLQPKSPSTPQAMRQQPK. The segment at 183–208 is disordered; sequence TTTPQLQPKSPSTPQAMRQQPKCTEG. In terms of domain architecture, Protein kinase spans 231–482; sequence LTDYKQIGEG…AKDLLRHPFF (252 aa). Residues 237 to 245 and Lys-260 each bind ATP; that span reads IGEGSTGVV. Asp-350 (proton acceptor) is an active-site residue.

The protein belongs to the protein kinase superfamily. STE Ser/Thr protein kinase family. STE20 subfamily. Mg(2+) is required as a cofactor. The cofactor is Mn(2+). In terms of tissue distribution, expressed in pharynx, vulva and spermatheca. Unlike other p21-activated kinases, expression is not detected in neurons.

It carries out the reaction L-seryl-[protein] + ATP = O-phospho-L-seryl-[protein] + ADP + H(+). The catalysed reaction is L-threonyl-[protein] + ATP = O-phospho-L-threonyl-[protein] + ADP + H(+). In terms of biological role, serine/threonine-protein kinase which plays a redundant role with pak-1 in embryogenesis but, in contrast to pak-1, is not involved in commissural axon guidance of ventral cord motoneurons or in distal tip cell (DTC) migration. This is Serine/threonine-protein kinase pak-2 from Caenorhabditis elegans.